A 415-amino-acid chain; its full sequence is Gamma-glutamyl phosphate reductase (415 aa).

It belongs to the gamma-glutamyl phosphate reductase family.

It is found in the cytoplasm. It carries out the reaction L-glutamate 5-semialdehyde + phosphate + NADP(+) = L-glutamyl 5-phosphate + NADPH + H(+). It functions in the pathway amino-acid biosynthesis; L-proline biosynthesis; L-glutamate 5-semialdehyde from L-glutamate: step 2/2. Catalyzes the NADPH-dependent reduction of L-glutamate 5-phosphate into L-glutamate 5-semialdehyde and phosphate. The product spontaneously undergoes cyclization to form 1-pyrroline-5-carboxylate. The chain is Gamma-glutamyl phosphate reductase from Parabacteroides distasonis (strain ATCC 8503 / DSM 20701 / CIP 104284 / JCM 5825 / NCTC 11152).